The chain runs to 468 residues: Acetyl-CoA decarbonylase/synthase complex subunit gamma (468 aa).

A 4Fe-4S domain is found at Met1–Asp60. Residues Cys18, Cys21, Cys26, and Cys43 each contribute to the [4Fe-4S] cluster site.

Heterodimer of delta and gamma chains. The ACDS complex is made up of alpha, epsilon, beta, gamma and delta chains with a probable stoichiometry of (alpha(2)epsilon(2))(4)-beta(8)-(gamma(1)delta(1))(8). Requires corrinoid as cofactor. The cofactor is [4Fe-4S] cluster.

The catalysed reaction is 5,6,7,8-tetrahydrosarcinapterin + methyl-Co(III)-[corrinoid Fe-S protein] = 5-methyltetrahydrosarcinapterin + Co(I)-[corrinoid Fe-S protein] + H(+). Its pathway is one-carbon metabolism; methanogenesis from acetate. In terms of biological role, part of a complex that catalyzes the reversible cleavage of acetyl-CoA, allowing growth on acetate as sole source of carbon and energy. This chain is Acetyl-CoA decarbonylase/synthase complex subunit gamma, found in Methanosarcina acetivorans (strain ATCC 35395 / DSM 2834 / JCM 12185 / C2A).